Here is a 153-residue protein sequence, read N- to C-terminus: Interleukin-17A (153 aa).

Residues 1–23 form the signal peptide; sequence MTPVRSSSLSLLLLLSLVALVKA. Asn-53 carries an N-linked (GlcNAc...) asparagine glycan. Disulfide bonds link Cys-92-Cys-142 and Cys-97-Cys-144.

Belongs to the IL-17 family. In terms of assembly, homodimer. Forms complexes with IL17RA and IL17RC receptors with 2:1 binding stoichiometry: two receptor chains for one interleukin molecule. IL17A homodimer preferentially drives the formation of IL17RA-IL17RC heterodimeric receptor complex. IL17A homodimer adopts an asymmetrical ternary structure with one IL17RA molecule, allowing for high affinity interactions of one IL17A monomer with one IL17RA molecule (via D1 and D2 domains), while disfavoring binding of a second IL17RA molecule on the other IL17A monomer. Heterodimer with IL17F. IL17A-IL17F forms complexes with IL17RA-IL17RC, but with lower affinity when compared to IL17A homodimer. IL17RA and IL17RC chains cannot distinguish between IL17A and IL17F molecules, potentially enabling the formation of topologically distinct complexes. Highly expressed in adult heart, skin, and intestinal tissues, such as jejunum and ileum.

It is found in the secreted. Functionally, effector cytokine of innate and adaptive immune system involved in antimicrobial host defense and maintenance of tissue integrity. Signals via IL17RA-IL17RC heterodimeric receptor complex, triggering homotypic interaction of IL17RA and IL17RC chains with TRAF3IP2 adapter. This leads to downstream TRAF6-mediated activation of NF-kappa-B and MAPkinase pathways ultimately resulting in transcriptional activation of cytokines, chemokines, antimicrobial peptides and matrix metalloproteinases, with potential strong immune inflammation. Plays an important role in connecting T cell-mediated adaptive immunity and acute inflammatory response to destroy extracellular bacteria and fungi. As a signature effector cytokine of T-helper 17 cells (Th17), primarily induces neutrophil activation and recruitment at infection and inflammatory sites. In airway epithelium, mediates neutrophil chemotaxis via induction of CXCL1 and CXCL5 chemokines. In secondary lymphoid organs, contributes to germinal center formation by regulating the chemotactic response of B cells to CXCL12 and CXCL13, enhancing retention of B cells within the germinal centers, B cell somatic hypermutation rate and selection toward plasma cells. Effector cytokine of a subset of gamma-delta T cells that functions as part of an inflammatory circuit downstream IL1B, TLR2 and IL23A-IL12B to promote neutrophil recruitment for efficient bacterial clearance. Effector cytokine of innate immune cells including invariant natural killer cell (iNKT) and group 3 innate lymphoid cells that mediate initial neutrophilic inflammation. Involved in the maintenance of the integrity of epithelial barriers during homeostasis and pathogen infection. Upon acute injury, has a direct role in epithelial barrier formation by regulating OCLN localization and tight junction biogenesis. As part of the mucosal immune response induced by commensal bacteria, enhances host's ability to resist pathogenic bacterial and fungal infections by promoting neutrophil recruitment and antimicrobial peptides release. In synergy with IL17F, mediates the production of antimicrobial beta-defensins DEFB1, DEFB103A, and DEFB104A by mucosal epithelial cells, limiting the entry of microbes through the epithelial barriers. Involved in antiviral host defense through various mechanisms. Enhances immunity against West Nile virus by promoting T cell cytotoxicity. May play a beneficial role in influenza A virus (H5N1) infection by enhancing B cell recruitment and immune response in the lung. Contributes to influenza A virus (H1N1) clearance by driving the differentiation of B-1a B cells, providing for production of virus-specific IgM antibodies at first line of host defense. In Sus scrofa (Pig), this protein is Interleukin-17A (IL17A).